Here is a 211-residue protein sequence, read N- to C-terminus: Uracil phosphoribosyltransferase (211 aa).

5-phospho-alpha-D-ribose 1-diphosphate-binding positions include R79, R104, and 131–139 (DPMLATGGS). Uracil contacts are provided by residues I196 and 201–203 (GDA). D202 contacts 5-phospho-alpha-D-ribose 1-diphosphate.

This sequence belongs to the UPRTase family. Requires Mg(2+) as cofactor.

It catalyses the reaction UMP + diphosphate = 5-phospho-alpha-D-ribose 1-diphosphate + uracil. Its pathway is pyrimidine metabolism; UMP biosynthesis via salvage pathway; UMP from uracil: step 1/1. Its activity is regulated as follows. Allosterically activated by GTP. Functionally, catalyzes the conversion of uracil and 5-phospho-alpha-D-ribose 1-diphosphate (PRPP) to UMP and diphosphate. The chain is Uracil phosphoribosyltransferase from Lactococcus lactis subsp. lactis (strain IL1403) (Streptococcus lactis).